Here is a 154-residue protein sequence, read N- to C-terminus: Transcription antitermination protein NusB (154 aa).

This sequence belongs to the NusB family.

Its function is as follows. Involved in transcription antitermination. Required for transcription of ribosomal RNA (rRNA) genes. Binds specifically to the boxA antiterminator sequence of the ribosomal RNA (rrn) operons. The chain is Transcription antitermination protein NusB from Hyphomonas neptunium (strain ATCC 15444).